The sequence spans 515 residues: Protein disulfide-isomerase (515 aa).

Residues Met1–Ala20 form the signal peptide. 2 Thioredoxin domains span residues Ala21–Pro136 and Val343–Lys470. Catalysis depends on nucleophile residues Cys58, Cys61, Cys393, and Cys396. Cystine bridges form between Cys58–Cys61 and Cys393–Cys396. Composition is skewed to basic and acidic residues over residues Lys472–Ser496 and Ser506–Leu515. The interval Lys472 to Leu515 is disordered. The short motif at His512–Leu515 is the Prevents secretion from ER element.

The protein belongs to the protein disulfide isomerase family.

It is found in the endoplasmic reticulum lumen. It catalyses the reaction Catalyzes the rearrangement of -S-S- bonds in proteins.. Participates in the folding of proteins containing disulfide bonds, may be involved in glycosylation, prolyl hydroxylation and triglyceride transfer. The sequence is that of Protein disulfide-isomerase (pdiA) from Aspergillus oryzae (strain ATCC 42149 / RIB 40) (Yellow koji mold).